The primary structure comprises 657 residues: Probable serine/threonine-protein kinase CA_C1728 (657 aa).

A Protein kinase domain is found at 10–274 (YKIEEEIGVG…ELSNVKNNYV (265 aa)). ATP-binding positions include 16–24 (IGVGGTAVV) and K39. D143 acts as the Proton acceptor in catalysis. Positions 286-334 (PAQIQNESNPNNKLDNDDTYYNGEPYNKEQPQEEPQEENEEPKNKIKGN) are disordered. Residues 288–298 (QIQNESNPNNK) show a composition bias toward polar residues. PASTA domains lie at 375–441 (SVSK…DISS), 443–509 (DTDQ…VISR), and 512–577 (EVKK…VIGR). The disordered stretch occupies residues 581–657 (TAVQPPNNNN…TNTPNGTGQK (77 aa)). Composition is skewed to low complexity over residues 584-600 (QPPNNNNGNGNQNQNQN), 613-637 (PTGGNNDNQNQNNTTNPNGTQPAGG), and 645-657 (GNVTNTPNGTGQK).

The protein belongs to the protein kinase superfamily. Ser/Thr protein kinase family.

It carries out the reaction L-seryl-[protein] + ATP = O-phospho-L-seryl-[protein] + ADP + H(+). It catalyses the reaction L-threonyl-[protein] + ATP = O-phospho-L-threonyl-[protein] + ADP + H(+). In Clostridium acetobutylicum (strain ATCC 824 / DSM 792 / JCM 1419 / IAM 19013 / LMG 5710 / NBRC 13948 / NRRL B-527 / VKM B-1787 / 2291 / W), this protein is Probable serine/threonine-protein kinase CA_C1728.